We begin with the raw amino-acid sequence, 474 residues long: Bifunctional protein HldE (474 aa).

The tract at residues 1 to 318 (MKLSMPRFDQ…RAIQREEGSE (318 aa)) is ribokinase. Residue 194 to 197 (NLSE) participates in ATP binding. Asp263 is a catalytic residue. The tract at residues 343–474 (FTNGCFDILH…AIVEKIRGQG (132 aa)) is cytidylyltransferase.

It in the N-terminal section; belongs to the carbohydrate kinase PfkB family. This sequence in the C-terminal section; belongs to the cytidylyltransferase family. In terms of assembly, homodimer.

It catalyses the reaction D-glycero-beta-D-manno-heptose 7-phosphate + ATP = D-glycero-beta-D-manno-heptose 1,7-bisphosphate + ADP + H(+). It carries out the reaction D-glycero-beta-D-manno-heptose 1-phosphate + ATP + H(+) = ADP-D-glycero-beta-D-manno-heptose + diphosphate. Its pathway is nucleotide-sugar biosynthesis; ADP-L-glycero-beta-D-manno-heptose biosynthesis; ADP-L-glycero-beta-D-manno-heptose from D-glycero-beta-D-manno-heptose 7-phosphate: step 1/4. It participates in nucleotide-sugar biosynthesis; ADP-L-glycero-beta-D-manno-heptose biosynthesis; ADP-L-glycero-beta-D-manno-heptose from D-glycero-beta-D-manno-heptose 7-phosphate: step 3/4. Catalyzes the phosphorylation of D-glycero-D-manno-heptose 7-phosphate at the C-1 position to selectively form D-glycero-beta-D-manno-heptose-1,7-bisphosphate. In terms of biological role, catalyzes the ADP transfer from ATP to D-glycero-beta-D-manno-heptose 1-phosphate, yielding ADP-D-glycero-beta-D-manno-heptose. The protein is Bifunctional protein HldE of Pseudomonas savastanoi pv. phaseolicola (strain 1448A / Race 6) (Pseudomonas syringae pv. phaseolicola (strain 1448A / Race 6)).